Consider the following 295-residue polypeptide: Cyclin-G1 (295 aa).

Belongs to the cyclin family. Cyclin G subfamily.

The protein resides in the nucleus. In terms of biological role, may play a role in growth regulation. Is associated with G2/M phase arrest in response to DNA damage. May be an intermediate by which p53 mediates its role as an inhibitor of cellular proliferation. This Bos taurus (Bovine) protein is Cyclin-G1 (CCNG1).